The primary structure comprises 440 residues: uncharacterized protein (440 aa).

Disordered stretches follow at residues 49–81 (CPPA…EPSL) and 162–295 (LPKP…CASE). Over residues 55–80 (HGHSSLRTNLNSSPPRCPQNPGTEPS) the composition is skewed to polar residues. Residues 249–266 (YREELSNTKSRFSEDKGS) show a composition bias toward basic and acidic residues. Residues 274 to 284 (SSNSSEPGLPG) are compositionally biased toward low complexity.

The protein belongs to the tymoviridae protein p69 family.

This is an uncharacterized protein from Erysimum latent virus (ELV).